The primary structure comprises 492 residues: Catalase (492 aa).

Residues His65 and Asn138 contribute to the active site. Tyr348 contacts heme.

The protein belongs to the catalase family. As to quaternary structure, homotetramer. Requires heme as cofactor.

Its subcellular location is the cytoplasm. The protein resides in the cytosol. The protein localises to the peroxisome matrix. It carries out the reaction 2 H2O2 = O2 + 2 H2O. In terms of biological role, catalyzes the degradation of hydrogen peroxide (H(2)O(2)) generated by peroxisomal oxidases to water and oxygen, thereby protecting cells from the toxic effects of hydrogen peroxide. The chain is Catalase from Ipomoea batatas (Sweet potato).